The chain runs to 147 residues: Hemoglobin subunit gamma (147 aa).

Residues 3 to 147 enclose the Globin domain; it reads DFTAEEKAAI…VASAVARKYH (145 aa). Residues His64 and His93 each contribute to the heme b site.

It belongs to the globin family. As to quaternary structure, heterotetramer of two alpha chains and two gamma chains in fetal hemoglobin (Hb F). As to expression, red blood cells.

Its function is as follows. Gamma chains make up the fetal hemoglobin F, in combination with alpha chains. This chain is Hemoglobin subunit gamma (HBG), found in Trichechus manatus (Caribbean manatee).